A 210-amino-acid polypeptide reads, in one-letter code: 3-hexulose-6-phosphate synthase (210 aa).

The protein belongs to the HPS/KGPDC family. HPS subfamily.

It carries out the reaction D-ribulose 5-phosphate + formaldehyde = D-arabino-hex-3-ulose 6-phosphate. The protein operates within one-carbon metabolism; formaldehyde assimilation via RuMP pathway; D-fructose 6-phosphate from D-ribulose 5-phosphate and formaldehyde: step 1/2. Functionally, catalyzes the condensation of ribulose 5-phosphate with formaldehyde to form 3-hexulose 6-phosphate. This chain is 3-hexulose-6-phosphate synthase, found in Staphylococcus epidermidis (strain ATCC 35984 / DSM 28319 / BCRC 17069 / CCUG 31568 / BM 3577 / RP62A).